The following is a 493-amino-acid chain: Ribonuclease Y (493 aa).

A helical membrane pass occupies residues 19–39; that stretch reads IFAILFLIIVILNLGLLVFLA. Positions 172–241 constitute a KH domain; the sequence is SASFTVIESD…LTIRNILIND (70 aa). The region spanning 300 to 392 is the HD domain; that stretch reads VLSHCLETGF…TQIGDKLSAG (93 aa).

The protein belongs to the RNase Y family.

It is found in the cell membrane. Functionally, endoribonuclease that initiates mRNA decay. This Mycoplasma pneumoniae (strain ATCC 29342 / M129 / Subtype 1) (Mycoplasmoides pneumoniae) protein is Ribonuclease Y.